A 52-amino-acid chain; its full sequence is Insulin (52 aa).

3 disulfide bridges follow: cysteine 7-cysteine 38, cysteine 19-cysteine 51, and cysteine 37-cysteine 42.

It belongs to the insulin family. Heterodimer of a B chain and an A chain linked by two disulfide bonds.

Its subcellular location is the secreted. Insulin decreases blood glucose concentration. It increases cell permeability to monosaccharides, amino acids and fatty acids. It accelerates glycolysis, the pentose phosphate cycle, and glycogen synthesis in liver. The polypeptide is Insulin (ins) (Amia calva (Bowfin)).